We begin with the raw amino-acid sequence, 209 residues long: Uridine kinase (209 aa).

G12 to T19 is a binding site for ATP.

This sequence belongs to the uridine kinase family.

Its subcellular location is the cytoplasm. It carries out the reaction uridine + ATP = UMP + ADP + H(+). The catalysed reaction is cytidine + ATP = CMP + ADP + H(+). The protein operates within pyrimidine metabolism; CTP biosynthesis via salvage pathway; CTP from cytidine: step 1/3. It functions in the pathway pyrimidine metabolism; UMP biosynthesis via salvage pathway; UMP from uridine: step 1/1. The chain is Uridine kinase from Streptococcus agalactiae serotype V (strain ATCC BAA-611 / 2603 V/R).